A 154-amino-acid chain; its full sequence is Resuscitation-promoting factor RpfD (154 aa).

A helical transmembrane segment spans residues Ile21–Gly41.

It belongs to the transglycosylase family. Rpf subfamily.

It localises to the cell membrane. Its function is as follows. Factor that stimulates resuscitation of dormant cells. Has peptidoglycan (PG) hydrolytic activity. PG fragments could either directly activate the resuscitation pathway of dormant bacteria or serve as a substrate for endogenous Rpf, resulting in low molecular weight products with resuscitation activity. The protein is Resuscitation-promoting factor RpfD (rpfD) of Mycobacterium tuberculosis (strain CDC 1551 / Oshkosh).